Reading from the N-terminus, the 119-residue chain is Large ribosomal subunit protein uL22 (119 aa).

Belongs to the universal ribosomal protein uL22 family. As to quaternary structure, part of the 50S ribosomal subunit.

This protein binds specifically to 23S rRNA; its binding is stimulated by other ribosomal proteins, e.g. L4, L17, and L20. It is important during the early stages of 50S assembly. It makes multiple contacts with different domains of the 23S rRNA in the assembled 50S subunit and ribosome. Functionally, the globular domain of the protein is located near the polypeptide exit tunnel on the outside of the subunit, while an extended beta-hairpin is found that lines the wall of the exit tunnel in the center of the 70S ribosome. In Bifidobacterium longum (strain DJO10A), this protein is Large ribosomal subunit protein uL22.